The primary structure comprises 103 residues: uncharacterized protein (103 aa).

3 consecutive transmembrane segments (helical) span residues 1 to 21 (MPGVIFWTIFIIQFMIWVFLS), 29 to 49 (IAFIWGTMPFLALYLKYTGYF), and 69 to 89 (VVEWSYLVVQTTVPSWIGLLF).

Its subcellular location is the cell membrane. This is an uncharacterized protein from Methanocaldococcus jannaschii (strain ATCC 43067 / DSM 2661 / JAL-1 / JCM 10045 / NBRC 100440) (Methanococcus jannaschii).